The following is a 707-amino-acid chain: Dendrin (707 aa).

5 disordered regions span residues 1 to 22 (MLDG…DEES), 67 to 86 (QNRT…RRPW), 94 to 195 (ATNW…PWGG), 213 to 273 (AGTA…KKRL), and 342 to 377 (TEVA…GSEE). A coiled-coil region spans residues 103–134 (AEVRAREQEKRKAASQEREAKETERKRRKAGG). Residues 105–127 (VRAREQEKRKAASQEREAKETER) are compositionally biased toward basic and acidic residues. Residues 113-131 (RKAASQEREAKETERKRRK) are nuclear localization. An interaction with MAGI2 region spans residues 186 to 236 (GVAWAGPWGGRRPGPPSYEAHLLLRGAAGTAPRRRWDRPPPYVAPPSYEGP). The segment at 340–434 (PVTEVALSGS…LEVWKVTRRA (95 aa)) is interaction with ACTN1. Positions 359 to 369 (PRSRQHLRGSR) are enriched in basic residues. Serine 387 bears the Phosphoserine mark. Disordered stretches follow at residues 389-421 (KKPP…EGTE) and 517-707 (RVLN…GKRE). The segment at 406–707 (GGTGWKESLG…TRKTPQGKRE (302 aa)) is interaction with CD2AP and NPHS1. 2 stretches are compositionally biased toward basic and acidic residues: residues 524–544 (EGRE…EERS) and 692–707 (GLVR…GKRE).

As to quaternary structure, forms a ternary complex with MAGI2 and SH3KBP1; recruits DDN to the cytoplasm. Interacts with MAGI1. Interacts with ACTN1 and may interact with WWC1. Interacts with the podocyte slit diaphragm proteins CD2AP, NPHS1 and NPHS2; the interaction with CD2AP and NPHS1 is direct. In terms of tissue distribution, specifically expressed in forebrain structures, particularly in neocortex, olfactory bulb, hippocampus, caudate-putamen, and limbic system (at protein level). Also detected in spleen, liver, kidney and placenta (at protein level).

The protein resides in the cell projection. Its subcellular location is the dendritic spine membrane. It is found in the cytoplasm. The protein localises to the endoplasmic reticulum membrane. It localises to the perikaryon. The protein resides in the nucleus. Its function is as follows. Promotes apoptosis of kidney glomerular podocytes. Podocytes are highly specialized cells essential to the ultrafiltration of blood, resulting in the extraction of urine and the retention of protein. This Rattus norvegicus (Rat) protein is Dendrin (Ddn).